Reading from the N-terminus, the 362-residue chain is MQSPTAQGTNDGVRPARTWPSVLGTLTDGRDLSVDEAKWAMDEIMSDNATSAQIAAFGVALKMKGETPEELRGLADSMLGHARKVPVDDDVVDIVGTGGDRSNTVNISTMASLVVAASGIRVVKHGNRAASSKSGGADVLEALGVKINLGPDEVARCVREVGIGFCFAPVFHPALRFAGAPRKEIGIPTVFNVLGPLTNPARPRAGLIGCAFPGLISVVAGVLAQRGNSALVVRGDDGLDELTTSTTSTVHIVADGAVTTRQLDPRDIGIARVSLDELRGGDAEVNAAVARRLFAGETGPVRDAVLLNAAAAIAAFRGLGGRTLEDALSDGLSTAAQSIDSGAAATLLARWAELTSGLATSK.

5-phospho-alpha-D-ribose 1-diphosphate contacts are provided by residues Gly-96, 99-100 (GD), Thr-104, 106-109 (NIST), 124-132 (KHGNRAASS), and Gly-136. Position 96 (Gly-96) interacts with anthranilate. Ser-108 is a Mg(2+) binding site. Asn-127 is a binding site for anthranilate. Arg-182 is a binding site for anthranilate. Residues Asp-240 and Glu-241 each coordinate Mg(2+).

The protein belongs to the anthranilate phosphoribosyltransferase family. As to quaternary structure, homodimer. Mg(2+) is required as a cofactor.

It catalyses the reaction N-(5-phospho-beta-D-ribosyl)anthranilate + diphosphate = 5-phospho-alpha-D-ribose 1-diphosphate + anthranilate. It participates in amino-acid biosynthesis; L-tryptophan biosynthesis; L-tryptophan from chorismate: step 2/5. In terms of biological role, catalyzes the transfer of the phosphoribosyl group of 5-phosphorylribose-1-pyrophosphate (PRPP) to anthranilate to yield N-(5'-phosphoribosyl)-anthranilate (PRA). The chain is Anthranilate phosphoribosyltransferase from Rhodococcus jostii (strain RHA1).